The following is a 198-amino-acid chain: Threonylcarbamoyl-AMP synthase (198 aa).

The YrdC-like domain occupies 15–198; it reads LLKIYHIIKL…AISGQLIRRG (184 aa).

Belongs to the SUA5 family. TsaC subfamily.

The protein resides in the cytoplasm. It carries out the reaction L-threonine + hydrogencarbonate + ATP = L-threonylcarbamoyladenylate + diphosphate + H2O. Functionally, required for the formation of a threonylcarbamoyl group on adenosine at position 37 (t(6)A37) in tRNAs that read codons beginning with adenine. Catalyzes the conversion of L-threonine, HCO(3)(-)/CO(2) and ATP to give threonylcarbamoyl-AMP (TC-AMP) as the acyladenylate intermediate, with the release of diphosphate. In Baumannia cicadellinicola subsp. Homalodisca coagulata, this protein is Threonylcarbamoyl-AMP synthase.